The sequence spans 467 residues: Na(+)-translocating NADH-quinone reductase subunit A (467 aa).

Belongs to the NqrA family. In terms of assembly, composed of six subunits; NqrA, NqrB, NqrC, NqrD, NqrE and NqrF.

The catalysed reaction is a ubiquinone + n Na(+)(in) + NADH + H(+) = a ubiquinol + n Na(+)(out) + NAD(+). NQR complex catalyzes the reduction of ubiquinone-1 to ubiquinol by two successive reactions, coupled with the transport of Na(+) ions from the cytoplasm to the periplasm. NqrA to NqrE are probably involved in the second step, the conversion of ubisemiquinone to ubiquinol. This chain is Na(+)-translocating NADH-quinone reductase subunit A, found in Chlamydia pneumoniae (Chlamydophila pneumoniae).